Consider the following 241-residue polypeptide: ATP synthase subunit a (241 aa).

5 helical membrane-spanning segments follow: residues 30–50 (GQVF…ISLG), 91–111 (FIGT…LIPW), 128–148 (INTT…AGLS), 193–213 (LVVG…VMFL), and 214–234 (GLFT…YYIG).

The protein belongs to the ATPase A chain family. As to quaternary structure, F-type ATPases have 2 components, CF(1) - the catalytic core - and CF(0) - the membrane proton channel. CF(1) has five subunits: alpha(3), beta(3), gamma(1), delta(1), epsilon(1). CF(0) has four main subunits: a, b, b' and c.

The protein localises to the cellular thylakoid membrane. In terms of biological role, key component of the proton channel; it plays a direct role in the translocation of protons across the membrane. The chain is ATP synthase subunit a from Prochlorococcus marinus (strain MIT 9215).